The following is a 31-amino-acid chain: U6-ctenitoxin-Co1a (31 aa).

2 disulfide bridges follow: Cys-2/Cys-18 and Cys-9/Cys-23.

Expressed by the venom gland.

It localises to the secreted. In terms of biological role, antagonist of L-type calcium channels (Cav1/CACNA1). The protein is U6-ctenitoxin-Co1a of Ctenus ornatus (Brazilian spider).